The chain runs to 85 residues: LYR motif-containing protein 5A (85 aa).

It belongs to the complex I LYR family.

The sequence is that of LYR motif-containing protein 5A (lyrm5a) from Danio rerio (Zebrafish).